The sequence spans 982 residues: E3 ubiquitin-protein ligase CBL-B (982 aa).

Low complexity predominate over residues 1–14 (MASSSSSSSSTNSS). The interval 1 to 25 (MASSSSSSSSTNSSAVTGRLPGARS) is disordered. Positions 46–178 (PPKQAAADRR…KAIFPSGQFQ (133 aa)) are 4H. The region spanning 46 to 354 (PPKQAAADRR…GRSYNPDLTD (309 aa)) is the Cbl-PTB domain. Residues 179-251 (GDNFRITKAD…FEFDIFTRLF (73 aa)) form an EF-hand-like region. Positions 232, 234, 236, 238, and 243 each coordinate Ca(2+). The SH2-like stretch occupies residues 252–354 (QPWTSILRNW…GRSYNPDLTD (103 aa)). Arg297 is a binding site for 4-O-phospho-L-tyrosine. Positions 355–383 (LCEPTPHDHIKVTQEQYELYCEMGSTFQL) are linker. Residues 384–423 (CKICAENDKDVKIEPCGHLMCTSCLTSWQESDGQGCPFCR) form an RING-type zinc finger. 3 disordered regions span residues 480 to 582 (MNER…RTCR), 709 to 728 (VRNS…SHPV), and 766 to 911 (LKQP…PVPR). Residues 483 to 497 (RQNSPVTSPGSSPLS) show a composition bias toward polar residues. Over residues 554 to 576 (LPAPPPPLREPPPPPERPPPIPP) the composition is skewed to pro residues. Residues 825–834 (PSQPPPPPPA) are compositionally biased toward pro residues. Positions 927–970 (SLAENVDAKIAKLMGEGFPFEEVKRALEIAQNNVDVARSILREF) constitute a UBA domain.

Interacts with several SH3 domain-containing proteins and with poly-ubiquitinated proteins.

The protein resides in the cytoplasm. It carries out the reaction S-ubiquitinyl-[E2 ubiquitin-conjugating enzyme]-L-cysteine + [acceptor protein]-L-lysine = [E2 ubiquitin-conjugating enzyme]-L-cysteine + N(6)-ubiquitinyl-[acceptor protein]-L-lysine.. Its pathway is protein modification; protein ubiquitination. Functionally, E3 ubiquitin-protein ligase which accepts ubiquitin from specific E2 ubiquitin-conjugating enzymes, and transfers it to substrates, generally promoting their degradation by the proteasome. The protein is E3 ubiquitin-protein ligase CBL-B (cblb) of Xenopus tropicalis (Western clawed frog).